The following is a 381-amino-acid chain: Queuine tRNA-ribosyltransferase (381 aa).

The active-site Proton acceptor is the D92. Substrate is bound by residues 92 to 96 (DSGGF), D146, Q190, and G217. The tract at residues 248–254 (GVGRPED) is RNA binding. Residue D267 is the Nucleophile of the active site. An RNA binding; important for wobble base 34 recognition region spans residues 272-276 (TRNAR). 4 residues coordinate Zn(2+): C305, C307, C310, and H337.

It belongs to the queuine tRNA-ribosyltransferase family. Homodimer. Within each dimer, one monomer is responsible for RNA recognition and catalysis, while the other monomer binds to the replacement base PreQ1. Zn(2+) is required as a cofactor.

The catalysed reaction is 7-aminomethyl-7-carbaguanine + guanosine(34) in tRNA = 7-aminomethyl-7-carbaguanosine(34) in tRNA + guanine. It participates in tRNA modification; tRNA-queuosine biosynthesis. Catalyzes the base-exchange of a guanine (G) residue with the queuine precursor 7-aminomethyl-7-deazaguanine (PreQ1) at position 34 (anticodon wobble position) in tRNAs with GU(N) anticodons (tRNA-Asp, -Asn, -His and -Tyr). Catalysis occurs through a double-displacement mechanism. The nucleophile active site attacks the C1' of nucleotide 34 to detach the guanine base from the RNA, forming a covalent enzyme-RNA intermediate. The proton acceptor active site deprotonates the incoming PreQ1, allowing a nucleophilic attack on the C1' of the ribose to form the product. After dissociation, two additional enzymatic reactions on the tRNA convert PreQ1 to queuine (Q), resulting in the hypermodified nucleoside queuosine (7-(((4,5-cis-dihydroxy-2-cyclopenten-1-yl)amino)methyl)-7-deazaguanosine). This chain is Queuine tRNA-ribosyltransferase, found in Xanthomonas axonopodis pv. citri (strain 306).